Reading from the N-terminus, the 160-residue chain is SsrA-binding protein (160 aa).

Positions 136–160 are disordered; sequence KRDTMRERDSNRELQRAVRNKGKED.

It belongs to the SmpB family.

The protein resides in the cytoplasm. Required for rescue of stalled ribosomes mediated by trans-translation. Binds to transfer-messenger RNA (tmRNA), required for stable association of tmRNA with ribosomes. tmRNA and SmpB together mimic tRNA shape, replacing the anticodon stem-loop with SmpB. tmRNA is encoded by the ssrA gene; the 2 termini fold to resemble tRNA(Ala) and it encodes a 'tag peptide', a short internal open reading frame. During trans-translation Ala-aminoacylated tmRNA acts like a tRNA, entering the A-site of stalled ribosomes, displacing the stalled mRNA. The ribosome then switches to translate the ORF on the tmRNA; the nascent peptide is terminated with the 'tag peptide' encoded by the tmRNA and targeted for degradation. The ribosome is freed to recommence translation, which seems to be the essential function of trans-translation. The protein is SsrA-binding protein of Pseudomonas putida (strain GB-1).